The chain runs to 458 residues: UPF0210 protein MMP1427 (458 aa).

This sequence belongs to the UPF0210 family.

This Methanococcus maripaludis (strain DSM 14266 / JCM 13030 / NBRC 101832 / S2 / LL) protein is UPF0210 protein MMP1427.